Consider the following 60-residue polypeptide: Antimicrobial peptide Eval151 (60 aa).

The N-terminal stretch at 1–23 is a signal peptide; the sequence is MKVLPVLFLTLLVLISIPAETFC. Arginine 36 is subject to Arginine amide. A compositionally biased stretch (basic and acidic residues) spans 36–54; that stretch reads RGKRNDFFRSDVSRDDESH. Residues 36 to 60 are disordered; it reads RGKRNDFFRSDVSRDDESHPSPGQK. Residues 37 to 60 constitute a propeptide that is removed on maturation; that stretch reads GKRNDFFRSDVSRDDESHPSPGQK.

This sequence belongs to the non-disulfide-bridged peptide (NDBP) superfamily. Expressed by the venom gland.

The protein localises to the secreted. Its function is as follows. Probable antimicrobial peptide. Has no inhibitory activity against herpes simplex virus type 1 (HSV-1). The polypeptide is Antimicrobial peptide Eval151 (Euscorpiops validus (Scorpion)).